The primary structure comprises 296 residues: Nucleotide-binding protein SSA_0810 (296 aa).

G13 to T20 contacts ATP. Residue D63 to S66 participates in GTP binding. The interval W277–S296 is disordered. Over residues S282 to S296 the composition is skewed to basic and acidic residues.

Belongs to the RapZ-like family.

Functionally, displays ATPase and GTPase activities. The polypeptide is Nucleotide-binding protein SSA_0810 (Streptococcus sanguinis (strain SK36)).